The sequence spans 93 residues: Alpha-conotoxin RVIIIA (93 aa).

Residues 1–20 (MMSKMGAMFVLLLLFTLASS) form the signal peptide. The propeptide occupies 21-46 (QQEGDVQARKTHPKREFQRILLRSGR). 2 positions are modified to 4-carboxyglutamate: Glu63 and Glu68.

Contains 5 disulfide bonds. In terms of tissue distribution, expressed by the venom duct.

Its subcellular location is the secreted. Functionally, alpha-conotoxins act on postsynaptic membranes, they bind to the nicotinic acetylcholine receptors (nAChR) and thus inhibit them. This toxin provokes a nearly complete and slowly reversible inhibition of both the human adult (alpha-1-beta-1-epsilon-delta (CHRNA1-CHRNB1-CHRND-CHRNE)) and human fetal (alpha-1-beta-1-gamma-delta (CHRNA1-CHRNB1-CHRNG-CHRND)) neuromuscular nAChRs. It also reversibly blocks the neuromuscular alpha-7/CHRNA7 nAChR, the alpha-3-beta-2 (CHRNA3-CHRNB2) nAChR, the chimeric alpha-6 or -3/beta-3 or -2 (CHRNA6/CHRNA3-CHRNB2-CHRNB3) nAChR and with a low potency the alpha-4-beta-2 (CHRNA4-CHRNB2) nAChR. In addition, the toxin also inhibits the alpha-9-alpha-10 (CHRNA9-CHRNA10) nAChR with a high potency (IC(50)=187 nM). The chain is Alpha-conotoxin RVIIIA from Conus radiatus (Rayed cone).